Consider the following 150-residue polypeptide: MSTLEQKLTEMLTAPVEALGFELVGIEFIRGRTSTLRIYIDSEDGINVDDCADVSHQVSAVMDVEDPITVAYNLEVSSPGLDRPMFTAEHYQRFTGEEVALVLRMAVQNRRKWQGIIKAVDGEMITVTVEGKDEVFALSNIQKANLVPHF.

The protein belongs to the RimP family.

The protein resides in the cytoplasm. Functionally, required for maturation of 30S ribosomal subunits. The chain is Ribosome maturation factor RimP from Klebsiella pneumoniae (strain 342).